Reading from the N-terminus, the 1355-residue chain is MTNEKMIFRNRVVDKGQLRNLISWAFTHYGTARTAVMADKLKDLGFRYATRAGVSISVDDLMVPPSKRSLLEAAEEEIRATEVRYQRGEITEVERFQKVIDTWNGTSEALKDEVVTHFKQTNPLNSVYMMAFSGARGNISQVRQLVGMRGLMADPQGEIIDLPIKTNFREGLTVTEYIISSYGARKGLVDTALRTADSGYLTRRLVDVSQDVIIREIDCGTTRGIPVRPMTEGSKTLIKLSTRLLGRVVGEDVIHPKTKEVIAARNTPISDDLAKEIEKAGVAEVVVRSPLTCEAARSVCQHCYGWSLAHAKMVDLGEAVGIIAAQSIGEPGTQLTMRTFHTGGVFTGEVAQQVRSKMDGTIKLPRKLRTRTHRTRHGEDALFVESNGIMILEPRKEGSETPAPQEIHVTQGSTIYIVDGQQVKQGQLLAEVALGGRTTRTNTEKAVKDVASDLAGEVKFAEVVPEQKTDRQGNTTTTAARGGLIWILSGEVYNLPPGAELVVKNGDRVETNGVLAETKLTTIHGGVVRLPEATPGKSTREIEIITASVVLDQATVTVQSSQGRNNYLITTGNNQVFNLRATPGTKVQNGQVVAELIDDRYRTTTGGFLKFAGVEVQKKGKAKLGYEVVQGGTLLWIPEETHEVNKDISLLLVEDGQFVEAGTEVVKDIFCQNSGVVEVTQKNDILREVVVKPGELLMVDDPEAVIGRDNTLLQPGEELLGQVATELRYIQYVESPEGPALLSRPVVEFAVPSNPDVPSTTSVSQQTGRSIQMRAVQRLPYKDSERVKSVEGVELLRTQLVLEIEQEGEQEHNASPLAADIELIPDPEDADVQRLQLVILESLVLRRDIAADATQGSTQTSLEVKDGDTIVPGSVVARTQILSKEGGIVRGVQKGSEAVRRCLVLRHSDMTTLNTSAKPKVKAGDLIVAGTELAPGVFAEESGQIVAVKNAGESTTTQDAALSTQNYAVTIRAGRPYRVSPGAVLQIEDGDLVQRGDNLVLLVFERAKTGDIIQGLPRIEELLEARKPKEACILAKRGGEVKVVYGDGDEAIAIKVIESNGVVTDYPLGPGQNLAMPDGSVVPAGQPLSDGPSNPHEILEVFFSLGSEDGVYACASHALQKVQTFLVNEVQMVYQSQGIDIADKHIEVIVRQMTNKVRIDDGGDTTMLPGELVELRQVEQVNEAMAITGGARAQYTPVLLGITKASLNTDSFISAASFQETTRVLTEAAIEGKSDWLRGLKENVIIGRLIPAGTGYNTYDEPGMLEDYSTLETTSVLDETDDPLDMVLDDRTARAYNLDSPGLAETGFSNRRSILDDDELIADEIHDLVEAEVEVDDEVDDDYEDDDEDDDDYED.

Zn(2+)-binding residues include Cys-219, Cys-293, Cys-300, and Cys-303. Residues 1331–1355 are disordered; it reads AEVEVDDEVDDDYEDDDEDDDDYED.

It belongs to the RNA polymerase beta' chain family. RpoC2 subfamily. As to quaternary structure, in cyanobacteria the RNAP catalytic core is composed of 2 alpha, 1 beta, 1 beta', 1 gamma and 1 omega subunit. When a sigma factor is associated with the core the holoenzyme is formed, which can initiate transcription. The cofactor is Zn(2+).

It carries out the reaction RNA(n) + a ribonucleoside 5'-triphosphate = RNA(n+1) + diphosphate. In terms of biological role, DNA-dependent RNA polymerase catalyzes the transcription of DNA into RNA using the four ribonucleoside triphosphates as substrates. This chain is DNA-directed RNA polymerase subunit beta', found in Trichormus variabilis (strain ATCC 29413 / PCC 7937) (Anabaena variabilis).